A 101-amino-acid chain; its full sequence is Small ribosomal subunit protein bS18c (101 aa).

It belongs to the bacterial ribosomal protein bS18 family. As to quaternary structure, part of the 30S ribosomal subunit.

It is found in the plastid. The protein resides in the chloroplast. The sequence is that of Small ribosomal subunit protein bS18c from Gossypium hirsutum (Upland cotton).